The sequence spans 161 residues: ATP synthase subunit b 1 (161 aa).

The helical transmembrane segment at 5 to 25 (PETWVAIAFLLLMGVFAYVGV) threads the bilayer.

It belongs to the ATPase B chain family. As to quaternary structure, F-type ATPases have 2 components, F(1) - the catalytic core - and F(0) - the membrane proton channel. F(1) has five subunits: alpha(3), beta(3), gamma(1), delta(1), epsilon(1). F(0) has three main subunits: a(1), b(2) and c(10-14). The alpha and beta chains form an alternating ring which encloses part of the gamma chain. F(1) is attached to F(0) by a central stalk formed by the gamma and epsilon chains, while a peripheral stalk is formed by the delta and b chains.

It is found in the cell inner membrane. In terms of biological role, f(1)F(0) ATP synthase produces ATP from ADP in the presence of a proton or sodium gradient. F-type ATPases consist of two structural domains, F(1) containing the extramembraneous catalytic core and F(0) containing the membrane proton channel, linked together by a central stalk and a peripheral stalk. During catalysis, ATP synthesis in the catalytic domain of F(1) is coupled via a rotary mechanism of the central stalk subunits to proton translocation. Functionally, component of the F(0) channel, it forms part of the peripheral stalk, linking F(1) to F(0). The chain is ATP synthase subunit b 1 from Nitrobacter winogradskyi (strain ATCC 25391 / DSM 10237 / CIP 104748 / NCIMB 11846 / Nb-255).